A 1758-amino-acid chain; its full sequence is RanBP2-like and GRIP domain-containing protein 4 (1758 aa).

Ser21 bears the Phosphoserine mark. 2 TPR repeats span residues 60-93 and 584-617; these read PRAH…NPTQ and QKMG…LKII. A disordered region spans residues 761-805; the sequence is DPLYKNGSLRNADSEIKHSTPSPTKYSLSPSKSYKYSPKTPPRWA. Low complexity predominate over residues 779–798; sequence STPSPTKYSLSPSKSYKYSP. The RanBD1 1 domain occupies 1037 to 1173; it reads HFEPVVQMPE…FEECQQLLLD (137 aa). 2 disordered regions span residues 1213 to 1249 and 1295 to 1332; these read QTKV…TLEW and SFKS…ERDG. The segment covering 1236-1245 has biased composition (polar residues); that stretch reads IKPNPENTGP. Low complexity predominate over residues 1295-1309; the sequence is SFKSALSPSKSPAKL. Residues 1318–1330 are compositionally biased toward acidic residues; that stretch reads TDEESDVTQEEER. The RanBD1 2 domain occupies 1334 to 1470; that stretch reads YFEPVVPLPD…FDEAKTAQEK (137 aa). Residues 1583 to 1594 show a composition bias toward polar residues; that stretch reads SETSSVAQSGSE. Residues 1583–1621 form a disordered region; sequence SETSSVAQSGSESKVEPKKCELSKNSDIEQSSDSKVKNL. Residues 1595 to 1618 show a composition bias toward basic and acidic residues; the sequence is SKVEPKKCELSKNSDIEQSSDSKV. Positions 1703–1753 constitute a GRIP domain; it reads QEESAANVEHLKNVLLQFIFLKPGSERERLLPVINTMLQLSPEEKGKLAAV.

This Homo sapiens (Human) protein is RanBP2-like and GRIP domain-containing protein 4 (RGPD4).